A 383-amino-acid chain; its full sequence is Insecticidal crystal protein Cry35Ab1 (383 aa).

Residues 26-138 (DDSGVSLMNK…NNPNQQWNLT (113 aa)) enclose the Ricin B-type lectin domain.

The protein belongs to the toxin_10 family. In terms of assembly, monomer in solution. Copurifies from parasporal inclusion bodies with Cry34Ab1. Post-translationally, proteolytic processing occurs near the C-terminus yielding a stable protein of approximately 40 kDa; this may be the active form of the protein.

Its function is as follows. Component of a binary insecticidal toxin active on western corn rootworm (WCR, Diabrotica virgifera subsp. virgifera Le Conte) and probably also on northern corn rootworm (D.barberi). Both proteins are required for maximal toxicity. The larval midgut epithelium is probably the primary target. This protein alone has no activity against southern corn rootworm (Diabrotica undecimpunctata howardi Barber), but it synergizes the toxic effect of its Cry34Ab1 partner. The 2 proteins individually and together form ion channels; channels made in the presence of the 2 proteins have higher conductance. Binds to WCR third instar midgut brush border membrane vesicles; binding improves over 10-fold in the presence of Cry34Ab1. This chain is Insecticidal crystal protein Cry35Ab1, found in Bacillus thuringiensis.